Reading from the N-terminus, the 88-residue chain is MLNTTFDQYLEFPCSFPFKVVGDASETLADRVVAVVQQHAPGDYSPTSKVSSKGTYLSVTIRVTVTSKDHIETLYTSLAAIEGVKRVL.

The protein belongs to the UPF0250 family.

This Shewanella amazonensis (strain ATCC BAA-1098 / SB2B) protein is UPF0250 protein Sama_2593.